The primary structure comprises 139 residues: Gastrula zinc finger protein XlCGF67.1 (139 aa).

5 consecutive C2H2-type zinc fingers follow at residues 6–28, 33–55, 61–83, 89–111, and 117–139; these read VSCP…KKVH, YSCS…LRTH, YSCS…KRIH, FSCQ…QKIH, and FSCS…SRIH.

The protein belongs to the krueppel C2H2-type zinc-finger protein family.

It localises to the nucleus. In terms of biological role, may be involved in transcriptional regulation. This chain is Gastrula zinc finger protein XlCGF67.1, found in Xenopus laevis (African clawed frog).